We begin with the raw amino-acid sequence, 326 residues long: Protein phosphatase PTC7 homolog fig (326 aa).

Residues 40-83 (VQGKSKPRSPHLTSPQCSPEHRPRRFRPPSASGRTAFSSAPRPK) form a disordered region. The PPM-type phosphatase domain occupies 64-314 (RFRPPSASGR…DDITVVLASV (251 aa)). The Mn(2+) site is built by D91, G92, and D236.

This sequence belongs to the PP2C family. Requires Mg(2+) as cofactor. The cofactor is Mn(2+).

The enzyme catalyses O-phospho-L-seryl-[protein] + H2O = L-seryl-[protein] + phosphate. The catalysed reaction is O-phospho-L-threonyl-[protein] + H2O = L-threonyl-[protein] + phosphate. The sequence is that of Protein phosphatase PTC7 homolog fig from Drosophila persimilis (Fruit fly).